The primary structure comprises 157 residues: 3-hydroxyacyl-[acyl-carrier-protein] dehydratase FabZ (157 aa).

Residue histidine 58 is part of the active site.

The protein belongs to the thioester dehydratase family. FabZ subfamily.

Its subcellular location is the cytoplasm. It catalyses the reaction a (3R)-hydroxyacyl-[ACP] = a (2E)-enoyl-[ACP] + H2O. In terms of biological role, involved in unsaturated fatty acids biosynthesis. Catalyzes the dehydration of short chain beta-hydroxyacyl-ACPs and long chain saturated and unsaturated beta-hydroxyacyl-ACPs. This chain is 3-hydroxyacyl-[acyl-carrier-protein] dehydratase FabZ, found in Rhizorhabdus wittichii (strain DSM 6014 / CCUG 31198 / JCM 15750 / NBRC 105917 / EY 4224 / RW1) (Sphingomonas wittichii).